The chain runs to 137 residues: MLVIILGVIGLLASSNLVSSSTSTRVGGHLPLTFDPPENELGYWCTYVESCRFCWDCEDGICTSRVWGNNSTSIIENDYVKYCEVSRWGDLCRYDVEEHIYHSMNCSDPKPWNPYKIARKEWKKDKHFRKELKKDEF.

An N-terminal signal peptide occupies residues 1–20 (MLVIILGVIGLLASSNLVSS). N-linked (GlcNAc...) asparagine; by host glycosylation is found at N69, N70, and N105.

This sequence belongs to the asfaviruses V110 family.

The polypeptide is Protein MGF 110-7L (Ornithodoros (relapsing fever ticks)).